Reading from the N-terminus, the 2208-residue chain is MDTFLLELKDLVRKYVPELVELSFQKDALLSQVHPRLVLVEGFKLLSLLVELESCKVNACRHNFEQKFVDVILSDHGVICPTLPKVTPDGFNLMGKTLILLETFVRVNPNDFERKWKADMSKLMSLKDDLARVGITMVPVVDGRGSYNTSYLPEWATERLRWLLIEILKGVKATSEIEIEDQEYQRLIHSLAKANNQSMGFENLEFLKRRLLSYDQLLDTSLLVGIRNDVRESKIIEELIKIKLWYKTEIFNKGLGKFKRTNKSNLLSDLLKIGLHQDSDTINCMFCSCKILELCYTLSNKLSIDHSKEEMKDDEVGGKQPVCISYSSLLSICNKIKGSKIFNTRRNTLLFLDLIMLNFIVDEMIQDDSVVDSLRGAGFIIGQMVVLVNDRALDILAAMKLIRHKLGNSKDWLSVCGKVLKRYDEEMWKEVKTYIKEPDFDMLFQLAKSLVSERPIMRYTVHKDNESRCLHQNSLNISDQSFKAMLKALSHVSLSLINSMKTSFSSRLLINEKDYSRYYGNVRLKECYVQRFPISSRVTGYLFYQKTGERSRCYSLYISENGELSELGSFYCDPKRFFLPVFSEDTIVSMCNEMVCWLDFDEQLVELVKPKLRSLVLLLLCSPSKRNQTFIQGLRYFIMAYANQAHHVDLMSKLEIECKSSSEIQLQRLAVTLFELVLSTGDDKDFGFARRFKFLLNISYLCHFVTKETPDRLTDQIKCFEKFLEPKLNFNSVIVNPSLSGILTEAQEEIMTSSVNRFFQKNLTNISDVKEPGVSKELISFCVSLFNRGKLRVSGDLKVDPFRPSFTSTALDLSSNKSVVVPKLDELGNALSKYDKQMMISSCVTTLTEMFKTKGRYNLDPDSLDFLVLKNLSNLVSVSVSKGQMKEELSLLYDTLSEEQLESFEQIKQDVQLTLSRMKESKCNNVGLGNSRKVNKHLSKSELLETLWSPYQVLRAIKNEVSIHEIKDFDPDIIEHETVKKLCDEVYQSSNKLEFFLEEPLKSVPLEFLLKNLTTIAYEETDYLECFKYLLIQGGFDQKLGSYEHKSRSRLGLSSEALRVQEDARVSTRESNAEAIAKKLDKTFFTSAALRNLCFYSEDSPTEFTSVSTNTGNLKFGLSYKEQVGSNRELYVGDLNTKLMTRLVEDFSEMITSSMRYSCLNSEKEFERAICDMKMAVNNGDISMSLDHSKWGPHMSPALFYSFLANLNLTEPKSRAKLNLGPLLDILKWHLHKVVEVPFNVAQAYCVGKIKRSLGLMECQTSSVTEQFYHNFLQRENEIPSHIMSVLDMGQGILHNLSDLYALITEQFLNYAIYKLYDVDVLSYTSSDDQISIMKLPAYEHIDEDSPDWLEIVCFHEYLSSKLNKFVSPKSVVGNFVAEFKSRFFVMGEETPLLTKFVAAALHNVRCKTPTQLAETVDTICDQCVANGVSVSIVSKISERVNRLVKYSGFGETPFLSVVKQDVKDWSDGSRGYRLQRNIENSLRDSKILEVMRKGARKVFLGIKNGRIFEENLIGLIGRGGDEALRGFLLYAEVDKDEIENALRYRWVNTSTFGDLRLVLRTKIMSSKRVLERESIPSLVKTLQSRMSKNFTKGAKKILAESINKSAFQSSVASGFIGFCKSMGSKCVRDGSGGFIYLKDIYKKITTCECKHCSVWRGVVYCEKSVEKIFQFTRSIMWDYFTLVLTNACELGEWVFSSVKLPTKATILDNPNLFWAIKPRTHKHIEDRLGLNHILHSIKKNYPQLFEEHLAPFMSDLQSNQMINPSKIKFLDICVALDMVNENLGIIGHLLRGRNNTIYIVKQSECAGAHVRQADYVDQDLGLSPQQICYNFKVQFLLSSMINPLIVSTSTLRSFFWFNEVLSIEEDDQIELGELTDFTLSIKTYNLERAMTLDDMTMGYVCSTLLDEVVSLESLDSCQDLAALQFKRQDLSDFFRDLGEDFVKVGLNIQIVHQRRSTKFDISRKVVYTFRILLLINLSEHLREEVKIPVQSLSLYASGAGNNHLFLDGVSMIPTLPLFNGSKSVNLAKVLIEHELATSNDFKLLECVIMDFSNFLDELRDKYSYVLVGPEEQENPIVFQNGAFMADNQKLSYMRVEIFGDTIVKALGALETDREIENLLCNLWPYLKSIKKTIDFNQADFEMIYDLHRTALLKSLCQMDSWIEFTSFSVAYSKHLQDLVVSDNLGNLRLKGITCRPFRRDQCIQEIE.

An endonuclease region spans residues 26–284 (KDALLSQVHP…LHQDSDTINC (259 aa)). Positions 51, 89, and 102 each coordinate Mn(2+). Residue Lys-115 is part of the active site. Residues 1171-1367 (CDMKMAVNNG…YLSSKLNKFV (197 aa)) enclose the RdRp catalytic domain. A Mg(2+)-binding site is contributed by Asp-1329.

This sequence belongs to the Bunyavirales RNA polymerase family. Homomultimer; the oligomeric structure is essential for the polymerase activity. Interacts with nucleoprotein N. Interacts with protein Z; this interaction inhibits viral transcription and replication, Z partially blocks the product exit tunnel for the releasing nascent RNA product. Mn(2+) serves as cofactor. The cofactor is Mg(2+).

The protein localises to the virion. The protein resides in the host cytoplasm. It carries out the reaction RNA(n) + a ribonucleoside 5'-triphosphate = RNA(n+1) + diphosphate. RNA-dependent RNA polymerase, which is responsible for the replication and transcription of the viral RNA genome using antigenomic RNA as an intermediate. During transcription, synthesizes subgenomic RNAs and assures their capping by a cap-snatching mechanism, which involves the endonuclease activity cleaving the host capped pre-mRNAs. These short capped RNAs are then used as primers for viral transcription. The 3'-end of subgenomic mRNAs molecules are heterogeneous and not polyadenylated. The replicase function is to direct synthesis of antigenomic and genomic RNA which are encapsidated and non capped. As a consequence of the use of the same enzyme for both transcription and replication, these mechanisms need to be well coordinated. These processes may be regulated by proteins N and Z in a dose-dependent manner. Z protein inhibits the viral polymerase L und thus the viral transcription and RNA synthesis. The polypeptide is RNA-directed RNA polymerase L (Homo sapiens (Human)).